We begin with the raw amino-acid sequence, 149 residues long: Azurin (149 aa).

The signal sequence occupies residues 1–20 (MLAKATLAIVLSAASLPVLA). The region spanning 21-149 (AQCEATIESN…MMKGTLKLSN (129 aa)) is the Plastocyanin-like domain. Cysteine 23 and cysteine 46 form a disulfide bridge. Histidine 66, cysteine 132, histidine 137, and methionine 141 together coordinate Cu cation.

Its subcellular location is the periplasm. Its function is as follows. Transfers electrons from cytochrome c551 to cytochrome oxidase. This Achromobacter denitrificans (Alcaligenes denitrificans) protein is Azurin (azu).